Reading from the N-terminus, the 238-residue chain is Uridylate kinase (238 aa).

12–15 (KLSG) is an ATP binding site. G54 contacts UMP. ATP contacts are provided by G55 and R59. Residues D74 and 135 to 142 (TGNPFFTT) each bind UMP. 3 residues coordinate ATP: T162, Y168, and D171.

It belongs to the UMP kinase family. In terms of assembly, homohexamer.

Its subcellular location is the cytoplasm. It carries out the reaction UMP + ATP = UDP + ADP. Its pathway is pyrimidine metabolism; CTP biosynthesis via de novo pathway; UDP from UMP (UMPK route): step 1/1. With respect to regulation, inhibited by UTP. Its function is as follows. Catalyzes the reversible phosphorylation of UMP to UDP. The protein is Uridylate kinase of Methylobacillus flagellatus (strain ATCC 51484 / DSM 6875 / VKM B-1610 / KT).